Here is a 172-residue protein sequence, read N- to C-terminus: Ribosome maturation factor RimM (172 aa).

The region spanning 96-168 (DGEFYYHEII…RVDVEIPEGL (73 aa)) is the PRC barrel domain.

Belongs to the RimM family. In terms of assembly, binds ribosomal protein uS19.

The protein localises to the cytoplasm. An accessory protein needed during the final step in the assembly of 30S ribosomal subunit, possibly for assembly of the head region. Essential for efficient processing of 16S rRNA. May be needed both before and after RbfA during the maturation of 16S rRNA. It has affinity for free ribosomal 30S subunits but not for 70S ribosomes. The sequence is that of Ribosome maturation factor RimM from Streptococcus sanguinis (strain SK36).